A 98-amino-acid chain; its full sequence is Co-chaperonin GroES (98 aa).

This sequence belongs to the GroES chaperonin family. As to quaternary structure, heptamer of 7 subunits arranged in a ring. Interacts with the chaperonin GroEL.

Its subcellular location is the cytoplasm. In terms of biological role, together with the chaperonin GroEL, plays an essential role in assisting protein folding. The GroEL-GroES system forms a nano-cage that allows encapsulation of the non-native substrate proteins and provides a physical environment optimized to promote and accelerate protein folding. GroES binds to the apical surface of the GroEL ring, thereby capping the opening of the GroEL channel. The polypeptide is Co-chaperonin GroES (Coprothermobacter proteolyticus (strain ATCC 35245 / DSM 5265 / OCM 4 / BT)).